The chain runs to 632 residues: RNA-binding post-transcriptional regulator csx1 (632 aa).

Phosphoserine; by MAPK sty1 occurs at positions 42 and 54. Ser67 and Ser69 each carry phosphoserine. RRM domains are found at residues 85-167 and 182-261; these read DTLW…WATG and FSIF…VASP. Ser291 is subject to Phosphoserine; by MAPK sty1. Positions 297–369 constitute an RRM 3 domain; sequence TTVFVGGLAS…SHIRLAWGHN (73 aa). At Ser455 the chain carries Phosphoserine; by MAPK sty1. The disordered stretch occupies residues 456–476; the sequence is PPPLSRSASISPTLSGSGSGL. Over residues 466–476 the composition is skewed to low complexity; that stretch reads SPTLSGSGSGL.

In terms of assembly, interacts with cip1 and cip2.

Its subcellular location is the cytoplasm. Regulates global gene expression after oxidative stress. Interacts and stabilizes atf1 and pcr1 mRNAs after oxidative stress, thus controlling their turnover. This chain is RNA-binding post-transcriptional regulator csx1 (csx1), found in Schizosaccharomyces pombe (strain 972 / ATCC 24843) (Fission yeast).